The chain runs to 313 residues: Protein FixB (313 aa).

255-283 (LYLAVGISGQIQHMVGANASQTIFAINKD) lines the FAD pocket.

It belongs to the ETF alpha-subunit/FixB family. As to quaternary structure, heterodimer of FixA and FixB.

It functions in the pathway amine and polyamine metabolism; carnitine metabolism. Functionally, required for anaerobic carnitine reduction. May bring reductant to CaiA. This chain is Protein FixB, found in Escherichia coli O127:H6 (strain E2348/69 / EPEC).